Here is a 220-residue protein sequence, read N- to C-terminus: Adenylate kinase (220 aa).

Gly-10–Thr-15 is an ATP binding site. The tract at residues Ser-30–Val-59 is NMP. AMP is bound by residues Thr-31, Arg-36, Asn-57–Val-59, Gly-85–Arg-88, and Gln-92. The interval Gly-122–Asp-159 is LID. ATP is bound by residues Arg-123 and Thr-132–Tyr-133. AMP contacts are provided by Arg-156 and Arg-167. Gly-205 serves as a coordination point for ATP.

It belongs to the adenylate kinase family. In terms of assembly, monomer.

The protein resides in the cytoplasm. The enzyme catalyses AMP + ATP = 2 ADP. Its pathway is purine metabolism; AMP biosynthesis via salvage pathway; AMP from ADP: step 1/1. Catalyzes the reversible transfer of the terminal phosphate group between ATP and AMP. Plays an important role in cellular energy homeostasis and in adenine nucleotide metabolism. This chain is Adenylate kinase, found in Chlorobium luteolum (strain DSM 273 / BCRC 81028 / 2530) (Pelodictyon luteolum).